We begin with the raw amino-acid sequence, 343 residues long: Ribosomal RNA small subunit methyltransferase, chloroplastic (343 aa).

The transit peptide at 1–48 directs the protein to the chloroplast; it reads MMNAVITSATINCNSLSPSWTCGDNSPSKLLLGEISAALSRRRTVKVS. Residues H78, M80, G105, E126, D151, and N183 each coordinate S-adenosyl-L-methionine.

Belongs to the class I-like SAM-binding methyltransferase superfamily. rRNA adenine N(6)-methyltransferase family.

It is found in the plastid. The protein localises to the chloroplast. Its function is as follows. Required for methylation of the 3' adenosines in the small subunit of plastid rRNA. Essential for chloroplast biogenesis at low temperatures. In Arabidopsis thaliana (Mouse-ear cress), this protein is Ribosomal RNA small subunit methyltransferase, chloroplastic.